The chain runs to 111 residues: uncharacterized protein (111 aa).

This is an uncharacterized protein from Paracoccus denitrificans.